Reading from the N-terminus, the 1003-residue chain is NACHT, LRR and PYD domains-containing protein 9B (1003 aa).

Residues 1–91 (MAGSSGYGLL…SIMAQKKKRH (91 aa)) enclose the Pyrin domain. The NACHT domain maps to 143 to 465 (VTAIVAGTTG…QDKDICVPVI (323 aa)). Residue 149 to 156 (GTTGEGKT) coordinates ATP. LRR repeat units follow at residues 749–770 (KVKH…SLCE), 778–799 (VLQS…HLYE), 806–826 (HLSL…NLLC), 835–856 (TLKE…EISA), 863–883 (NLKT…RQLC), 892–913 (NLEC…DLAL), and 920–940 (TLNS…VVLC).

Sensor component of NLRP9 inflammasomes. Inflammasomes are supramolecular complexes that assemble in the cytosol in response to pathogens, such as rotavirus, but not encephalomyocarditis virus (EMCV), and play critical roles in innate immunity and inflammation. The core of NLRP9 inflammasomes consists of a signal sensor component (NLRP9), an adapter (ASC/PYCARD), which recruits an effector pro-inflammatory caspase (CASP1). Within the complex, NLRP9 and PYCARD interact via their respective DAPIN/pyrin domains. This interaction initiates speck formation (nucleation) which greatly enhances further addition of soluble PYCARD molecules to the speck in a prion-like polymerization process. Clustered PYCARD nucleates the formation of CASP1 filaments through the interaction of their respective CARD domains, acting as a platform for CASP1 polymerization. CASP1 filament formation increases local enzyme concentration, resulting in trans-autocleavage and activation. Active CASP1 then processes IL1B and IL18 precursors, leading to the release of mature cytokines in the extracellular milieu and inflammatory response. Interacts with DHX9 upon rotavirus infection; this interaction may trigger inflammasome activation and inflammatory response. In terms of tissue distribution, predominantly expressed in the intestine, including proximal and distal colon, cecum, ileum, jejunum and duodenum (at protein level). In the ileum, expressed in epithelial cells. Also expressed in oocytes at all follicular stages and in preimplantation embryos (at protein level). Although expression decreases in preimplantation embryos, it is still detectable in blastocyts.

It is found in the cytoplasm. Its subcellular location is the inflammasome. Its function is as follows. As the sensor component of the NLRP9 inflammasome, plays a crucial role in innate immunity and inflammation. In response to pathogens, including rotavirus, initiates the formation of the inflammasome polymeric complex, made of NLRP9, PYCARD and CASP1. Recruitment of proCASP1 to the inflammasome promotes its activation and CASP1-catalyzed IL1B and IL18 maturation and release in the extracellular milieu. The active cytokines stimulate inflammatory responses. Inflammasomes can also induce pyroptosis, an inflammatory form of programmed cell death. NLRP9 inflammasome activation may be initiated by DHX9 interaction with viral double-stranded RNA (dsRNA), preferentially to short dsRNA segments. This chain is NACHT, LRR and PYD domains-containing protein 9B (Nlrp9b), found in Mus musculus (Mouse).